Consider the following 437-residue polypeptide: Adenylosuccinate synthetase (437 aa).

Residues 12–18 (GDEGKGK) and 40–42 (GHT) contribute to the GTP site. Residue Asp-13 is the Proton acceptor of the active site. Mg(2+)-binding residues include Asp-13 and Gly-40. Residues 13 to 16 (DEGK), 38 to 41 (NAGH), Thr-128, Arg-142, Gln-223, Thr-238, and Arg-302 each bind IMP. His-41 acts as the Proton donor in catalysis. 298–304 (TTTGRRR) is a substrate binding site. GTP contacts are provided by residues Arg-304, 330–332 (KLD), and 412–414 (SLG).

The protein belongs to the adenylosuccinate synthetase family. As to quaternary structure, homodimer. Mg(2+) serves as cofactor.

Its subcellular location is the cytoplasm. The enzyme catalyses IMP + L-aspartate + GTP = N(6)-(1,2-dicarboxyethyl)-AMP + GDP + phosphate + 2 H(+). It functions in the pathway purine metabolism; AMP biosynthesis via de novo pathway; AMP from IMP: step 1/2. Its function is as follows. Plays an important role in the de novo pathway of purine nucleotide biosynthesis. Catalyzes the first committed step in the biosynthesis of AMP from IMP. In Parasynechococcus marenigrum (strain WH8102), this protein is Adenylosuccinate synthetase.